A 184-amino-acid polypeptide reads, in one-letter code: Shikimate kinase (184 aa).

ATP is bound at residue 18 to 23 (GAGKTT). T22 provides a ligand contact to Mg(2+). Substrate-binding residues include D40, R64, and G86. Residue R124 participates in ATP binding. A substrate-binding site is contributed by R143. Residue Q160 participates in ATP binding.

It belongs to the shikimate kinase family. Monomer. Mg(2+) is required as a cofactor.

The protein localises to the cytoplasm. The enzyme catalyses shikimate + ATP = 3-phosphoshikimate + ADP + H(+). It participates in metabolic intermediate biosynthesis; chorismate biosynthesis; chorismate from D-erythrose 4-phosphate and phosphoenolpyruvate: step 5/7. Catalyzes the specific phosphorylation of the 3-hydroxyl group of shikimic acid using ATP as a cosubstrate. The polypeptide is Shikimate kinase (Chromobacterium violaceum (strain ATCC 12472 / DSM 30191 / JCM 1249 / CCUG 213 / NBRC 12614 / NCIMB 9131 / NCTC 9757 / MK)).